The sequence spans 1023 residues: Lon protease homolog (1023 aa).

Glycine 515–threonine 522 provides a ligand contact to ATP. Positions threonine 810–isoleucine 1003 constitute a Lon proteolytic domain. The active site involves serine 906.

Belongs to the peptidase S16 family.

In Acanthamoeba polyphaga (Amoeba), this protein is Lon protease homolog.